The sequence spans 1288 residues: Mitogen-activated protein kinase kinase kinase 6 (1288 aa).

The Protein kinase domain maps to 648–906 (TGERLVLGKG…AQTLLGDPFL (259 aa)). ATP contacts are provided by residues 654–662 (LGKGTYGVV) and Lys677. The Proton acceptor role is filled by Asp771. A Phosphothreonine modification is found at Thr806. Residues 899-997 (TLLGDPFLQP…SSGLSLLHQE (99 aa)) are disordered. A compositionally biased stretch (low complexity) spans 914–952 (SPSSPRHAPRPSDAPSASPTPSANSTTQSQTFPCPQAPS). Ser964 and Ser984 each carry phosphoserine. Over residues 980–989 (EEPASPEESS) the composition is skewed to low complexity. A coiled-coil region spans residues 1004–1029 (LAAVLEQELPALAENLHQEQKQEQGA). Positions 1123–1134 (VEKEAVSPRSEE) are enriched in basic and acidic residues. Positions 1123–1157 (VEKEAVSPRSEELSNEGDSQQSPGQQSPLPVEPEQ) are disordered. Ser1129 and Ser1149 each carry phosphoserine. Residues 1141–1151 (SQQSPGQQSPL) show a composition bias toward low complexity. A coiled-coil region spans residues 1166 to 1205 (LSLLRAETDRLREILAGKEREYQALVQRALQRLNEEARTY).

This sequence belongs to the protein kinase superfamily. STE Ser/Thr protein kinase family. MAP kinase kinase kinase subfamily. Binds both upstream activators and downstream substrates in multimolecular complexes. Requires Mg(2+) as cofactor.

The catalysed reaction is L-seryl-[protein] + ATP = O-phospho-L-seryl-[protein] + ADP + H(+). The enzyme catalyses L-threonyl-[protein] + ATP = O-phospho-L-threonyl-[protein] + ADP + H(+). Its activity is regulated as follows. Activated by phosphorylation on Thr-806. Catalytically active only when complexed with MAP3K5, with MAP3K5 supporting the stability and the active configuration of MAP3K6 and MAP3K6 activating MAP3K5 by direct phosphorylation. Component of a protein kinase signal transduction cascade. Activates the JNK, but not ERK or p38 kinase pathways. This Homo sapiens (Human) protein is Mitogen-activated protein kinase kinase kinase 6 (MAP3K6).